Here is a 475-residue protein sequence, read N- to C-terminus: Histidine--tRNA ligase (475 aa).

It belongs to the class-II aminoacyl-tRNA synthetase family. As to quaternary structure, homodimer.

The protein resides in the cytoplasm. It catalyses the reaction tRNA(His) + L-histidine + ATP = L-histidyl-tRNA(His) + AMP + diphosphate + H(+). The chain is Histidine--tRNA ligase from Flavobacterium johnsoniae (strain ATCC 17061 / DSM 2064 / JCM 8514 / BCRC 14874 / CCUG 350202 / NBRC 14942 / NCIMB 11054 / UW101) (Cytophaga johnsonae).